An 84-amino-acid polypeptide reads, in one-letter code: Transcription elongation factor 1 homolog (84 aa).

The Zn(2+) site is built by cysteine 26, cysteine 29, cysteine 50, and cysteine 53.

Belongs to the ELOF1 family.

It is found in the nucleus. In terms of biological role, transcription elongation factor implicated in the maintenance of proper chromatin structure in actively transcribed regions. This Caenorhabditis elegans protein is Transcription elongation factor 1 homolog.